Here is a 138-residue protein sequence, read N- to C-terminus: Acidic phospholipase A2 Cvv-E6h (138 aa).

The first 16 residues, 1–16 (MRTLWIVAVLLLGVEG), serve as a signal peptide directing secretion. 7 disulfide bridges follow: Cys-42/Cys-131, Cys-44/Cys-60, Cys-59/Cys-111, Cys-65/Cys-138, Cys-66/Cys-104, Cys-73/Cys-97, and Cys-91/Cys-102. Ca(2+) contacts are provided by Tyr-43, Gly-45, and Gly-47. His-63 is a catalytic residue. A Ca(2+)-binding site is contributed by Asp-64. Asp-105 is a catalytic residue.

Belongs to the phospholipase A2 family. Group II subfamily. D49 sub-subfamily. Ca(2+) serves as cofactor. As to expression, expressed by the venom gland.

Its subcellular location is the secreted. The enzyme catalyses a 1,2-diacyl-sn-glycero-3-phosphocholine + H2O = a 1-acyl-sn-glycero-3-phosphocholine + a fatty acid + H(+). Functionally, snake venom phospholipase A2 (PLA2) that shows very low inhibition of ADP-induced platelet aggregation in platelet-rich plasma of human, rabbit and guinea pig. In vivo, shows efficient edema-inducing activities in rat paws. PLA2 catalyzes the calcium-dependent hydrolysis of the 2-acyl groups in 3-sn-phosphoglycerides. The protein is Acidic phospholipase A2 Cvv-E6h of Crotalus viridis viridis (Prairie rattlesnake).